Here is a 369-residue protein sequence, read N- to C-terminus: Isocitrate dehydrogenase [NAD] subunit 2, mitochondrial (369 aa).

The transit peptide at 1-15 directs the protein to the mitochondrion; sequence MLRNTFFRNTSRRFL. A Phosphothreonine modification is found at T105. Substrate contacts are provided by R119, R129, and R150. The residue at position 153 (T153) is a Phosphothreonine. A substrate-binding site is contributed by D237. Positions 237, 263, and 267 each coordinate Mg(2+). Phosphothreonine occurs at positions 327 and 349.

This sequence belongs to the isocitrate and isopropylmalate dehydrogenases family. Octamer of two non-identical subunits IDH1 and IDH2. The cofactor is Mg(2+). It depends on Mn(2+) as a cofactor.

It is found in the mitochondrion matrix. The catalysed reaction is D-threo-isocitrate + NAD(+) = 2-oxoglutarate + CO2 + NADH. Allosterically regulated by several compounds including AMP, NAD(+), and citrate. Functionally, performs an essential role in the oxidative function of the citric acid cycle. Also binds RNA; specifically to the 5'-untranslated leaders of mitochondrial mRNAs. This chain is Isocitrate dehydrogenase [NAD] subunit 2, mitochondrial (IDH2), found in Saccharomyces cerevisiae (strain ATCC 204508 / S288c) (Baker's yeast).